We begin with the raw amino-acid sequence, 430 residues long: Nitroalkane oxidase (430 aa).

Residues 132–135, 140–142, 170–172, arginine 301, glutamine 311, 372–376, and 397–401 each bind FAD; these read LVFS, VAN, WAT, NAVGI, and IFDGG. The active-site Proton acceptor is aspartate 399.

Belongs to the acyl-CoA dehydrogenase family. In terms of assembly, homotetramer. It depends on FAD as a cofactor.

It catalyses the reaction a primary nitroalkane + O2 + H2O = an aldehyde + nitrite + H2O2 + H(+). The enzyme catalyses a secondary nitroalkane + O2 + H2O = a ketone + nitrite + H2O2 + H(+). Nitroalkane oxidase (NAO) catalyzes the oxidation of nitroalkanes to the corresponding aldehydes or ketones with the release of nitrite and the consumption of molecular oxygen to yield hydrogen peroxide. NAO is unusual, since it catalyzes substrate oxidation by removing a substrate proton to form a carbanion intermediate. Prefers longer nitroalkanes, with 1-nitrohexane having the highest activity. The sequence is that of Nitroalkane oxidase from Podospora anserina (strain S / ATCC MYA-4624 / DSM 980 / FGSC 10383) (Pleurage anserina).